The following is a 203-amino-acid chain: MDMFSWQLGLPSTLACLVFGYLLGSIPFGLILTRMAGLGDVRKIGSGNIGATNVLRTGNRKLAAATLLFDALKGTAAAAIASYWGVEAGIAAGFAAFLGHLFPVWLSFRGGKGVATYIGVLLGLMPVMVLLFAAIWLAMAKITRYSSLSALVATAAVPIALYAAGNGKVAGLFAVMTAIAWIKHRANIQRLLSGTESRIGEKG.

5 consecutive transmembrane segments (helical) span residues 13–33 (TLAC…LILT), 62–82 (LAAA…AIAS), 88–108 (AGIA…WLSF), 118–138 (IGVL…IWLA), and 159–179 (IALY…MTAI).

Belongs to the PlsY family. Probably interacts with PlsX.

It localises to the cell inner membrane. The enzyme catalyses an acyl phosphate + sn-glycerol 3-phosphate = a 1-acyl-sn-glycero-3-phosphate + phosphate. It participates in lipid metabolism; phospholipid metabolism. Functionally, catalyzes the transfer of an acyl group from acyl-phosphate (acyl-PO(4)) to glycerol-3-phosphate (G3P) to form lysophosphatidic acid (LPA). This enzyme utilizes acyl-phosphate as fatty acyl donor, but not acyl-CoA or acyl-ACP. This is Glycerol-3-phosphate acyltransferase from Rhizobium meliloti (strain 1021) (Ensifer meliloti).